The following is a 341-amino-acid chain: Adenine deaminase (341 aa).

Zn(2+) is bound by residues H24, H26, and H204. Catalysis depends on E207, which acts as the Proton donor. D285 contacts Zn(2+). D286 is a binding site for substrate.

This sequence belongs to the metallo-dependent hydrolases superfamily. Adenosine and AMP deaminases family. Adenine deaminase type 2 subfamily. Requires Zn(2+) as cofactor.

The enzyme catalyses adenine + H2O + H(+) = hypoxanthine + NH4(+). Functionally, catalyzes the hydrolytic deamination of adenine to hypoxanthine. Plays an important role in the purine salvage pathway and in nitrogen catabolism. This Sphingopyxis alaskensis (strain DSM 13593 / LMG 18877 / RB2256) (Sphingomonas alaskensis) protein is Adenine deaminase.